A 419-amino-acid polypeptide reads, in one-letter code: Histidine--tRNA ligase (419 aa).

Belongs to the class-II aminoacyl-tRNA synthetase family. Homodimer.

It localises to the cytoplasm. The enzyme catalyses tRNA(His) + L-histidine + ATP = L-histidyl-tRNA(His) + AMP + diphosphate + H(+). This Trichlorobacter lovleyi (strain ATCC BAA-1151 / DSM 17278 / SZ) (Geobacter lovleyi) protein is Histidine--tRNA ligase.